Here is a 667-residue protein sequence, read N- to C-terminus: MSAGQSTSQAAALAAFKSISTHPKTDQNPSKVHQSPERNVKRNPSGRLTNSRNATAVNAINRSPPKAPQKPQLSVVTASGHETKKNVENNRQRSSSPSPLYRTTTPKQMTSPSTSSASLPSNMIKSVKDSIEAKRHASEAKRLAQENQPSDMLTKIRQSINDRTRNIPNQAKVNERNMATINGIRESIESKRITTQANSSMIVLDTSSNSPYNFAPPDELRSPYEAHSPNYSYSSFESVPSAYSNPDSNIDLHDRGPETPSIVVDSPFNSQYDLSSPREDSDIDQERRNTAPILIPPSSNACARSANSAGSADDARSHLSSLKYQVEKEKNEDKNKKPKRKPPPELKPTTDLDGAFFSDSSSLNPGSSRSSLDAGSYSTDNESMGRNRMGSNDSDLSKPIKLPQYPELDTSSTKFKIRKRHGESNQNVGKMTESGSESDFEYPKATVPVSRATAPPLVHQKSQHVQLKTTMRDSKKKKKDKKSFDVDKPWKNHSDLDRISEADRKRYEGVWASNRGTYFNYVVTRINGIDYGSGGGSEQKIIVDEEDSMKAARLSAKQQADTVSGANGGYQSAEFHNITNAEISQLIHSSVVERIWERSRLPSETLRDIWELVDYRKDGTLNKPEFLVGMWLVDQCLYGRKLTKKVPASVWESLEGIGVSVKKKGKR.

3 stretches are compositionally biased toward polar residues: residues 1–10, 18–33, and 46–61; these read MSAGQSTSQA, SISTHPKTDQNPSKVH, and GRLTNSRNATAVNAIN. Disordered stretches follow at residues 1–123, 133–152, 234–441, and 459–488; these read MSAG…PSNM, AKRHASEAKRLAQENQPSDM, SSFE…SDFE, and HQKSQHVQLKTTMRDSKKKKKDKKSFDVDK. Basic and acidic residues predominate over residues 81 to 91; it reads HETKKNVENNR. Residues 92 to 109 show a composition bias toward polar residues; it reads QRSSSPSPLYRTTTPKQM. Positions 110–121 are enriched in low complexity; that stretch reads TSPSTSSASLPS. Residues 133-144 show a composition bias toward basic and acidic residues; sequence AKRHASEAKRLA. Over residues 234-248 the composition is skewed to polar residues; the sequence is SSFESVPSAYSNPDS. Positions 276 to 289 are enriched in basic and acidic residues; the sequence is SPREDSDIDQERRN. Low complexity predominate over residues 298–312; that stretch reads SSNACARSANSAGSA. Basic and acidic residues predominate over residues 325–335; the sequence is QVEKEKNEDKN. Residues 358–371 show a composition bias toward low complexity; the sequence is SDSSSLNPGSSRSS. 2 stretches are compositionally biased toward polar residues: residues 376–394 and 424–437; these read SYSTDNESMGRNRMGSNDS and SNQNVGKMTESGSE. The EH domain maps to 568-661; the sequence is GGYQSAEFHN…ESLEGIGVSV (94 aa).

Belongs to the IRS4 family.

Functionally, positive regulator of phosphatidylinositol 4,5-bisphosphate turnover and negatively regulates signaling through the cell integrity pathway. Involved in rDNA silencing. The chain is Increased rDNA silencing protein 4 (IRS4) from Meyerozyma guilliermondii (strain ATCC 6260 / CBS 566 / DSM 6381 / JCM 1539 / NBRC 10279 / NRRL Y-324) (Yeast).